The following is a 291-amino-acid chain: MEKLLHWSIANAQGDKEAIEKAGAPDPKLLEQLFGGGGPDDPTLMKEAMAVIMNPEADLENKLIAYDNFEMLIENLDNANNIENMKLWEPILKTLEDNEADLRASGLSVIGTAVQNNTDSQTNFLKYEGGLKILIAIAKSSEEPSDVRIKAFYALSNLLRNHIEAGKKFQALGGLDVFPVALNDPKATPKLKMRAISALSAFLSSSKIDEQLLDTLRKDGVLVSVIENLGTDNVNVIDRVLSVLSHLISSGIKFNDSELEMLQKEFEKIDSLKDRLNEDDYLAVKYVFSKK.

5 ARM repeats span residues 13-57 (QGDK…NPEA), 76-115 (LDNANNIENMKLWEPILKTLEDNEADLRASGLSVIGTAVQ), 119-160 (DSQT…NLLR), 163-204 (IEAG…AFLS), and 210-249 (EQLLDTLRKDGVLVSVIENLGTDNVNVIDRVLSVLSHLIS).

The protein belongs to the FES1 family.

The protein localises to the cytoplasm. Functionally, functions as a nucleotide exchange factor (NEF) for Hsp70 chaperones which accelerates the release of ADP. Required for fully efficient Hsp70-mediated folding of proteins. This Candida glabrata (strain ATCC 2001 / BCRC 20586 / JCM 3761 / NBRC 0622 / NRRL Y-65 / CBS 138) (Yeast) protein is Hsp70 nucleotide exchange factor FES1 (FES1).